Here is a 153-residue protein sequence, read N- to C-terminus: NADH dehydrogenase [ubiquinone] 1 beta subcomplex subunit 11, mitochondrial (153 aa).

The N-terminal 29 residues, 1-29 (MAAGLFGLSARRLLAAAATRGLPAARVRW), are a transit peptide targeting the mitochondrion. The interval 40–76 (PSAVAGKRPPEPTTPWQEDPEPEDENLYEKNPDSHGY) is disordered. The span at 66 to 76 (LYEKNPDSHGY) shows a compositional bias: basic and acidic residues. Residues 89-109 (LVFFFGVSIILVLGSTFVAYL) traverse the membrane as a helical segment.

It belongs to the complex I NDUFB11 subunit family. As to quaternary structure, complex I is composed of 45 different subunits. Interacts with BCAP31. Ubiquitous.

The protein resides in the mitochondrion inner membrane. Functionally, accessory subunit of the mitochondrial membrane respiratory chain NADH dehydrogenase (Complex I), that is believed not to be involved in catalysis. Complex I functions in the transfer of electrons from NADH to the respiratory chain. The immediate electron acceptor for the enzyme is believed to be ubiquinone. This is NADH dehydrogenase [ubiquinone] 1 beta subcomplex subunit 11, mitochondrial (NDUFB11) from Homo sapiens (Human).